A 588-amino-acid chain; its full sequence is Actin-histidine N-methyltransferase (588 aa).

The interval 1 to 25 is disordered; that stretch reads MGKKSRVKTQKSGTGATASVSPKET. The span at 10-25 shows a compositional bias: polar residues; the sequence is QKSGTGATASVSPKET. S-adenosyl-L-methionine-binding positions include Arg75, 104–106, Arg254, 275–279, and 325–327; these read EGF, DMCNH, and SGF. Positions 94–314 constitute an SET domain; the sequence is EGFEMVNFKE…AGEQIYIFYG (221 aa). Positions 546 to 588 are disordered; sequence VNGENSIPNGTRSGKENFNQEGSERATEGTKESSSDSTAGARE. Polar residues predominate over residues 548–566; it reads GENSIPNGTRSGKENFNQE. A compositionally biased stretch (basic and acidic residues) spans 567-579; the sequence is GSERATEGTKESS.

It belongs to the class V-like SAM-binding methyltransferase superfamily. SETD3 actin-histidine methyltransferase family. As to quaternary structure, interacts with MYOD1. Phosphorylated by GSK3B, which is required for recognition by the SCF(FBXW7) complex and subsequent degradation. In terms of processing, ubiquitinated by the SCF(FBXW7) complex following phosphorylation by GSK3B, leading to its degradation by the proteasome.

The protein resides in the cytoplasm. Its subcellular location is the nucleus. The enzyme catalyses L-histidyl-[protein] + S-adenosyl-L-methionine = N(tele)-methyl-L-histidyl-[protein] + S-adenosyl-L-homocysteine + H(+). Protein-histidine N-methyltransferase that specifically mediates 3-methylhistidine (tele-methylhistidine) methylation of actin at 'His-73'. Histidine methylation of actin is required for smooth muscle contraction of the laboring uterus during delivery. Does not have protein-lysine N-methyltransferase activity and probably only catalyzes histidine methylation of actin. The polypeptide is Actin-histidine N-methyltransferase (Canis lupus familiaris (Dog)).